The primary structure comprises 248 residues: tRNA (guanine-N(1)-)-methyltransferase (248 aa).

Residues glycine 113 and leucine 133 to leucine 138 contribute to the S-adenosyl-L-methionine site.

The protein belongs to the RNA methyltransferase TrmD family. In terms of assembly, homodimer.

It localises to the cytoplasm. The catalysed reaction is guanosine(37) in tRNA + S-adenosyl-L-methionine = N(1)-methylguanosine(37) in tRNA + S-adenosyl-L-homocysteine + H(+). Functionally, specifically methylates guanosine-37 in various tRNAs. The chain is tRNA (guanine-N(1)-)-methyltransferase from Albidiferax ferrireducens (strain ATCC BAA-621 / DSM 15236 / T118) (Rhodoferax ferrireducens).